The sequence spans 268 residues: Glucosamine-6-phosphate deaminase (268 aa).

Aspartate 72 (proton acceptor; for enolization step) is an active-site residue. Aspartate 141 serves as the catalytic For ring-opening step. The Proton acceptor; for ring-opening step role is filled by histidine 143. Glutamate 148 (for ring-opening step) is an active-site residue.

This sequence belongs to the glucosamine/galactosamine-6-phosphate isomerase family. NagB subfamily.

It catalyses the reaction alpha-D-glucosamine 6-phosphate + H2O = beta-D-fructose 6-phosphate + NH4(+). The protein operates within amino-sugar metabolism; N-acetylneuraminate degradation; D-fructose 6-phosphate from N-acetylneuraminate: step 5/5. Its activity is regulated as follows. Allosterically activated by N-acetylglucosamine 6-phosphate (GlcNAc6P). Functionally, catalyzes the reversible isomerization-deamination of glucosamine 6-phosphate (GlcN6P) to form fructose 6-phosphate (Fru6P) and ammonium ion. In Borrelia garinii subsp. bavariensis (strain ATCC BAA-2496 / DSM 23469 / PBi) (Borreliella bavariensis), this protein is Glucosamine-6-phosphate deaminase.